The chain runs to 1323 residues: Glutamate receptor ionotropic, NMDA 2D (1323 aa).

An N-terminal signal peptide occupies residues 1-27; the sequence is MRGAGGPRGPRGPAKMLLLLALACASP. Over 28–579 the chain is Extracellular; the sequence is FPEEVPGPGA…SPSAFLEPYS (552 aa). A glycan (N-linked (GlcNAc...) asparagine) is linked at N89. A disulfide bridge links C101 with C345. N349, N363, N381, and N464 each carry an N-linked (GlcNAc...) asparagine glycan. 2 disulfides stabilise this stretch: C452–C480 and C459–C481. L-glutamate-binding residues include S536, T538, and R543. N-linked (GlcNAc...) asparagine glycosylation occurs at N566. The chain crosses the membrane as a helical span at residues 580 to 601; that stretch reads PAVWVMMFVMCLTVVAVTVFIF. Topologically, residues 602 to 626 are cytoplasmic; the sequence is EYLSPVGYNRSLATGKRPGGSTFTI. An intramembrane region (discontinuously helical) is located at residues 627–638; it reads GKSIWLLWALVF. The tract at residues 628-647 is pore-forming; the sequence is KSIWLLWALVFNNSVPVENP. Residues 639-650 lie on the Cytoplasmic side of the membrane; the sequence is NNSVPVENPRGT. Residues 651–671 form a helical membrane-spanning segment; sequence TSKIMVLVWAFFAVIFLASYT. The Extracellular portion of the chain corresponds to 672–840; sequence ANLAAFMIQE…EVMSSKLDID (169 aa). N712 is a glycosylation site (N-linked (GlcNAc...) asparagine). Residues S714, T715, and D756 each contribute to the L-glutamate site. A disulfide bridge links C770 with C825. The helical transmembrane segment at 841-864 threads the bilayer; it reads NMAGVFYMLLVAMGLSLLVFAWEH. Residues 865-1323 are Cytoplasmic-facing; that stretch reads LVYWRLRHCL…AHFSSLESEV (459 aa). Disordered stretches follow at residues 897-952, 977-1112, and 1201-1323; these read EAAP…PGGA, AAPR…SLGG, and PWAA…ESEV. Over residues 899 to 929 the composition is skewed to pro residues; sequence APPPAKPPPPPQPLPSPAYPAARPPPGPAPF. Residues 931–940 are compositionally biased toward basic and acidic residues; that stretch reads PRERAAADRW. Low complexity predominate over residues 977-986; the sequence is AAPRGAAGRP. Pro residues predominate over residues 987 to 1001; that stretch reads LSPPTTQPPQKPPPS. Positions 1030-1039 are enriched in low complexity; it reads AAAAAAVGPP. Pro residues predominate over residues 1080–1092; sequence TAPPPRRAAPPPC. Basic residues predominate over residues 1208–1228; the sequence is PRRRARCGCPRPHPHRPRASH. Omega-N-methylarginine is present on R1303. S1313 is subject to Phosphoserine. Residues 1321-1323 carry the PDZ-binding motif; sequence SEV.

This sequence belongs to the glutamate-gated ion channel (TC 1.A.10.1) family. NR2D/GRIN2D subfamily. As to quaternary structure, heterotetramer. Forms heterotetrameric channels composed of two GluN1/zeta subunits (GRIN1), and two identical GluN2/epsilon subunits (GRIN2A, GRIN2B, GRIN2C or GRIN2D) or GluN3 subunits (GRIN3A or GRIN3B) (in vitro). In vivo, the subunit composition may depend on the expression levels of the different subunits. Interacts with PDZ domains of PATJ and DLG4. Expressed in brain, mainly in the subcortical region.

Its subcellular location is the cell membrane. The protein localises to the postsynaptic cell membrane. The enzyme catalyses Ca(2+)(in) = Ca(2+)(out). It catalyses the reaction Na(+)(in) = Na(+)(out). The catalysed reaction is K(+)(in) = K(+)(out). Component of N-methyl-D-aspartate (NMDA) receptors (NMDARs) that function as heterotetrameric, ligand-gated cation channels with high calcium permeability and voltage-dependent block by Mg(2+). Participates in synaptic plasticity for learning and memory formation. Channel activation requires binding of the neurotransmitter L-glutamate to the GluN2 subunit, glycine or D-serine binding to the GluN1 subunit, plus membrane depolarization to eliminate channel inhibition by Mg(2+). NMDARs mediate simultaneously the potasium efflux and the influx of calcium and sodium. Each GluN2 subunit confers differential attributes to channel properties, including activation, deactivation and desensitization kinetics, pH sensitivity, Ca2(+) permeability, and binding to allosteric modulators. In Rattus norvegicus (Rat), this protein is Glutamate receptor ionotropic, NMDA 2D.